The chain runs to 321 residues: Thioredoxin reductase (321 aa).

FAD is bound by residues serine 11–alanine 14, threonine 40–alanine 41, glutamine 45, asparagine 54, cysteine 145, aspartate 288, and arginine 295–alanine 297. Cysteine 142 and cysteine 145 form a disulfide bridge.

This sequence belongs to the class-II pyridine nucleotide-disulfide oxidoreductase family. In terms of assembly, homodimer. Requires FAD as cofactor.

The protein resides in the cytoplasm. The catalysed reaction is [thioredoxin]-dithiol + NADP(+) = [thioredoxin]-disulfide + NADPH + H(+). The chain is Thioredoxin reductase (TRR1) from Debaryomyces hansenii (strain ATCC 36239 / CBS 767 / BCRC 21394 / JCM 1990 / NBRC 0083 / IGC 2968) (Yeast).